Here is a 256-residue protein sequence, read N- to C-terminus: uncharacterized protein (256 aa).

A signal peptide spans 1 to 24 (MIKRVNKLVLGISLLFLVISITAG). Residue cysteine 25 is the site of N-palmitoyl cysteine attachment. Residue cysteine 25 is the site of S-diacylglycerol cysteine attachment.

Belongs to the staphylococcal tandem lipoprotein family.

The protein localises to the cell membrane. This is an uncharacterized protein from Staphylococcus aureus (strain NCTC 8325 / PS 47).